Here is a 290-residue protein sequence, read N- to C-terminus: ATP synthase gamma chain (290 aa).

Belongs to the ATPase gamma chain family. As to quaternary structure, F-type ATPases have 2 components, CF(1) - the catalytic core - and CF(0) - the membrane proton channel. CF(1) has five subunits: alpha(3), beta(3), gamma(1), delta(1), epsilon(1). CF(0) has three main subunits: a, b and c.

The protein resides in the cell membrane. Functionally, produces ATP from ADP in the presence of a proton gradient across the membrane. The gamma chain is believed to be important in regulating ATPase activity and the flow of protons through the CF(0) complex. The protein is ATP synthase gamma chain of Listeria welshimeri serovar 6b (strain ATCC 35897 / DSM 20650 / CCUG 15529 / CIP 8149 / NCTC 11857 / SLCC 5334 / V8).